The chain runs to 220 residues: Probable GTP-binding protein EngB (220 aa).

The region spanning 41-219 (DRSEVCFAGR…RAEIAALAML (179 aa)) is the EngB-type G domain. GTP is bound by residues 49–56 (GRSNVGKS), 76–80 (GRTRE), 96–99 (DLPG), 164–167 (TKVD), and 197–200 (MTSA). S56 and T78 together coordinate Mg(2+).

The protein belongs to the TRAFAC class TrmE-Era-EngA-EngB-Septin-like GTPase superfamily. EngB GTPase family. The cofactor is Mg(2+).

Functionally, necessary for normal cell division and for the maintenance of normal septation. This is Probable GTP-binding protein EngB from Hyphomonas neptunium (strain ATCC 15444).